The sequence spans 280 residues: Beta-lactamase OXA-58 (280 aa).

The first 18 residues, Met-1 to Ala-18, serve as a signal peptide directing secretion. Cys-19 carries N-palmitoyl cysteine lipidation. Cys-19 carries the S-diacylglycerol cysteine lipid modification. The Acyl-ester intermediate role is filled by Ser-83. Ser-83, Lys-86, Ser-130, Ser-221, Trp-223, and Arg-263 together coordinate a beta-lactam. Lys-86 bears the N6-carboxylysine mark.

The protein belongs to the class-D beta-lactamase family. Monomer. Dimer. Carboxylated on the epsilon-amino group of a lysine, with the resulting carbamate functional group serving as a general base. Probably N-carboxylated at Lys-86 at neutral pH in vivo and undergoes complete N-decarboxylation, at pH 4.1, in vitro. N-carboxylation at Lys-86 probably increases catalytic activity under physiological conditions.

It is found in the cell membrane. It catalyses the reaction a beta-lactam + H2O = a substituted beta-amino acid. Its activity is regulated as follows. Activated approximately 3-fold by the presence of 0.1M NaHCO3. Functionally, class D beta-lactamase which confers resistance to the beta-lactam antibiotics, including penicillins and oxacillin, and moderate resistance to carbapenems such as imipenem; in the DH10B strain of E.coli. Acts via hydrolysis of the beta-lactam ring. Has benzylpenicillin-, oxacillin-, cephalothin- and imipenem-hydrolyzing activities. This is Beta-lactamase OXA-58 from Acinetobacter baumannii.